We begin with the raw amino-acid sequence, 144 residues long: Small ribosomal subunit protein uS19 (144 aa).

The protein belongs to the universal ribosomal protein uS19 family.

In terms of biological role, protein S19 forms a complex with S13 that binds strongly to the 16S ribosomal RNA. The protein is Small ribosomal subunit protein uS19 of Hyperthermus butylicus (strain DSM 5456 / JCM 9403 / PLM1-5).